Consider the following 141-residue polypeptide: Hemoglobin subunit alpha (141 aa).

The 141-residue stretch at 1 to 141 folds into the Globin domain; it reads VLSGEDKNNI…VSTVLTSKYR (141 aa). The residue at position 3 (serine 3) is a Phosphoserine. N6-succinyllysine occurs at positions 7 and 11. Position 16 is an N6-acetyllysine; alternate (lysine 16). Lysine 16 bears the N6-succinyllysine; alternate mark. The residue at position 24 (tyrosine 24) is a Phosphotyrosine. Lysine 40 is modified (N6-succinyllysine). Phosphoserine is present on serine 49. Histidine 58 contacts O2. Histidine 87 serves as a coordination point for heme b. At serine 102 the chain carries Phosphoserine. Position 108 is a phosphothreonine (threonine 108). Phosphoserine occurs at positions 124 and 131. Phosphothreonine is present on residues threonine 134 and threonine 137. Position 138 is a phosphoserine (serine 138).

It belongs to the globin family. Heterotetramer of two alpha chains and two beta chains. Red blood cells.

Functionally, involved in oxygen transport from the lung to the various peripheral tissues. Hemopressin acts as an antagonist peptide of the cannabinoid receptor CNR1. Hemopressin-binding efficiently blocks cannabinoid receptor CNR1 and subsequent signaling. This chain is Hemoglobin subunit alpha (HBA), found in Ondatra zibethicus (Muskrat).